The primary structure comprises 561 residues: Putative transport protein YbjL (561 aa).

The next 5 membrane-spanning stretches (helical) occupy residues 8-28 (LLNG…LCLG), 32-52 (LGSI…LLGQ), 66-86 (FMLF…SIFF), 94-114 (MLAL…GKLF), and 158-178 (NLSL…IVGA). RCK C-terminal domains are found at residues 200–288 (RGLD…SFRN) and 292–373 (VFDR…RIGF). 5 helical membrane-spanning segments follow: residues 383–403 (LLAF…TFQF), 406–426 (FSFG…LGFM), 451–471 (VFMA…LGAI), 475–495 (MLIA…LFGA), and 540–560 (AIAN…WPGL).

This sequence belongs to the AAE transporter (TC 2.A.81) family. YbjL subfamily.

Its subcellular location is the cell membrane. This chain is Putative transport protein YbjL, found in Shigella boydii serotype 4 (strain Sb227).